The sequence spans 350 residues: MRYITAGESHGEALIAVIEGLPSNLLIDEEFINKELKRRQGGYGRGGRMAIEEDKVHVLSGIRNGKTIGSPLTLEIINKDYENWKNKKTPEVTRPRPGHADLAGAIKYNQRDLRNILERSSARETAARVAVGSVAKLLLKELDIYVKSKVLEIGGVKAEEKWRRTIDEAKSKGDTLGGIIEIVIEGVPVGLGSHVQWDRKLDALLAYHVMSVQAIKAVEIGLGFEAARKPGSLVHDEIYYDEERGFYRKTNNAGGIEGGISNGSPIVIKAAMKPIPTLLKPLTSIDINTKEEVKAAYERSDVTAVEAAACVLEAVCAWVIADECLKKFGGDSIEELKKNYDAYLVYVKNF.

The NADP(+) site is built by arginine 39 and arginine 45. FMN-binding positions include 119–121 (RSS), 213–214 (QA), glycine 258, 273–277 (KPIPT), and arginine 299.

This sequence belongs to the chorismate synthase family. Homotetramer. It depends on FMNH2 as a cofactor.

It carries out the reaction 5-O-(1-carboxyvinyl)-3-phosphoshikimate = chorismate + phosphate. It participates in metabolic intermediate biosynthesis; chorismate biosynthesis; chorismate from D-erythrose 4-phosphate and phosphoenolpyruvate: step 7/7. Its function is as follows. Catalyzes the anti-1,4-elimination of the C-3 phosphate and the C-6 proR hydrogen from 5-enolpyruvylshikimate-3-phosphate (EPSP) to yield chorismate, which is the branch point compound that serves as the starting substrate for the three terminal pathways of aromatic amino acid biosynthesis. This reaction introduces a second double bond into the aromatic ring system. In Thermoanaerobacter pseudethanolicus (strain ATCC 33223 / 39E) (Clostridium thermohydrosulfuricum), this protein is Chorismate synthase.